A 206-amino-acid chain; its full sequence is Pyridoxine/pyridoxamine 5'-phosphate oxidase (206 aa).

FMN contacts are provided by residues 53–58 (RMVLLK), 68–69 (YT), K75, and Q97. K58 serves as a coordination point for substrate. Positions 115, 119, and 123 each coordinate substrate. FMN-binding positions include 132–133 (QS) and W177. A substrate-binding site is contributed by 183–185 (RLH). R187 contributes to the FMN binding site.

The protein belongs to the pyridoxamine 5'-phosphate oxidase family. Homodimer. Requires FMN as cofactor.

It catalyses the reaction pyridoxamine 5'-phosphate + O2 + H2O = pyridoxal 5'-phosphate + H2O2 + NH4(+). The enzyme catalyses pyridoxine 5'-phosphate + O2 = pyridoxal 5'-phosphate + H2O2. It participates in cofactor metabolism; pyridoxal 5'-phosphate salvage; pyridoxal 5'-phosphate from pyridoxamine 5'-phosphate: step 1/1. It functions in the pathway cofactor metabolism; pyridoxal 5'-phosphate salvage; pyridoxal 5'-phosphate from pyridoxine 5'-phosphate: step 1/1. Functionally, catalyzes the oxidation of either pyridoxine 5'-phosphate (PNP) or pyridoxamine 5'-phosphate (PMP) into pyridoxal 5'-phosphate (PLP). This Allorhizobium ampelinum (strain ATCC BAA-846 / DSM 112012 / S4) (Agrobacterium vitis (strain S4)) protein is Pyridoxine/pyridoxamine 5'-phosphate oxidase.